A 146-amino-acid polypeptide reads, in one-letter code: SPFSAHEEKLILDLWAKVNVAACGGDALSRLLIIYPWKRRYFEHFGKMATDQDVLHNEKIQEHGKKVLASFGEAVKHLDNIQGHFAHLSKLHYEKFHVDCENFKLLGNIIIVVLGMHHPKEFTMETHAAFQKLARHVAAALSVEYY.

The region spanning 2–146 (PFSAHEEKLI…VAAALSVEYY (145 aa)) is the Globin domain. Heme b contacts are provided by His-63 and His-92.

This sequence belongs to the globin family. Heterotetramer of two alpha chains and two beta chains. When oxygenated in vitro, exists virtually only in polymeric form. When deoxygenated, forms tetramers, octamers and larger polymers. As to expression, red blood cells.

Functionally, involved in oxygen transport from the lung to the various peripheral tissues. The polypeptide is Hemoglobin subunit beta (Paleosuchus palpebrosus (Cuvier's smooth-fronted caiman)).